A 185-amino-acid polypeptide reads, in one-letter code: A-type ATP synthase subunit E (185 aa).

This sequence belongs to the V-ATPase E subunit family. Has multiple subunits with at least A(3), B(3), C, D, E, F, H, I and proteolipid K(x).

The protein resides in the cell membrane. Component of the A-type ATP synthase that produces ATP from ADP in the presence of a proton gradient across the membrane. This is A-type ATP synthase subunit E from Thermoplasma acidophilum (strain ATCC 25905 / DSM 1728 / JCM 9062 / NBRC 15155 / AMRC-C165).